Consider the following 112-residue polypeptide: Mitochondrial import inner membrane translocase subunit TIM14-1 (112 aa).

A2 carries the post-translational modification N-acetylalanine. A helical membrane pass occupies residues 7 to 23; that stretch reads AGVAVAATALAGRYGIQ. One can recognise a J domain in the interval 53–112; the sequence is EAALILGVRESVAAEKVKEAHRKVMVANHPDAGGSHFLASKINEAKDVMLGKTKNSGSAF.

The protein belongs to the TIM14 family. Probable component of the PAM complex at least composed of a mitochondrial HSP70 protein, TIMM44 and TIMM14. The complex interacts with the TIMM23 component of the TIM17:23 complex.

The protein localises to the mitochondrion. The protein resides in the mitochondrion inner membrane. Functionally, component of the PAM complex, a complex required for the translocation of transit peptide-containing proteins from the inner membrane into the mitochondrial matrix in an ATP-dependent manner. The polypeptide is Mitochondrial import inner membrane translocase subunit TIM14-1 (TIM14-1) (Arabidopsis thaliana (Mouse-ear cress)).